The primary structure comprises 262 residues: Small ribosomal subunit protein eS4C (262 aa).

The S4 RNA-binding domain maps to 42–105 (LPLIVFLRNR…GEHFRLVYDI (64 aa)). T194 is subject to Phosphothreonine.

Belongs to the eukaryotic ribosomal protein eS4 family. As to quaternary structure, component of the small ribosomal subunit (SSU). Mature yeast ribosomes consist of a small (40S) and a large (60S) subunit. The 40S small subunit contains 1 molecule of ribosomal RNA (18S rRNA) and at least 33 different proteins. The large 60S subunit contains 3 rRNA molecules (25S, 5.8S and 5S rRNA) and at least 46 different proteins.

The protein resides in the cytoplasm. In terms of biological role, component of the ribosome, a large ribonucleoprotein complex responsible for the synthesis of proteins in the cell. The small ribosomal subunit (SSU) binds messenger RNAs (mRNAs) and translates the encoded message by selecting cognate aminoacyl-transfer RNA (tRNA) molecules. The large subunit (LSU) contains the ribosomal catalytic site termed the peptidyl transferase center (PTC), which catalyzes the formation of peptide bonds, thereby polymerizing the amino acids delivered by tRNAs into a polypeptide chain. The nascent polypeptides leave the ribosome through a tunnel in the LSU and interact with protein factors that function in enzymatic processing, targeting, and the membrane insertion of nascent chains at the exit of the ribosomal tunnel. The protein is Small ribosomal subunit protein eS4C (rps403) of Schizosaccharomyces pombe (strain 972 / ATCC 24843) (Fission yeast).